Here is a 377-residue protein sequence, read N- to C-terminus: UDP-N,N'-diacetylbacillosamine 2-epimerase (hydrolyzing) (377 aa).

It belongs to the UDP-N-acetylglucosamine 2-epimerase family.

The enzyme catalyses UDP-N,N'-diacetylbacillosamine + H2O = 2,4-diacetamido-2,4,6-trideoxy-alpha-D-mannopyranose + UDP + H(+). Functionally, involved in biosynthesis of legionaminic acid (5,7-diamino-3,5,7,9-tetradeoxy-D-glycero-D-galacto-non-2-ulosonic acid)(Leg), a sialic acid-like derivative that is incorporated into virulence-associated cell surface glycoconjugates such as lipopolysaccharide (LPS) which could be a key determinant in the ability of L.pneumophila to inhibit the fusion of phagosomes with lysosomes. LPS contains a majority alpha2,4-linked homomer of legionaminic acid. Catalyzes the conversion of UDP-N,N'-diacetylbacillosamine (Bac2Ac4Ac) into 2,4-diacetamido-2,4,6-trideoxymannose and UDP. This Legionella pneumophila subsp. pneumophila (strain Philadelphia 1 / ATCC 33152 / DSM 7513) protein is UDP-N,N'-diacetylbacillosamine 2-epimerase (hydrolyzing).